A 930-amino-acid chain; its full sequence is Protein translocase subunit SecA (930 aa).

Residues Gln-87, 105-109 (GEGKT), and Asp-515 each bind ATP. The Zn(2+) site is built by Cys-914, Cys-916, Cys-925, and His-926.

This sequence belongs to the SecA family. As to quaternary structure, monomer and homodimer. Part of the essential Sec protein translocation apparatus which comprises SecA, SecYEG and auxiliary proteins SecDF-YajC and YidC. It depends on Zn(2+) as a cofactor.

It localises to the cell inner membrane. The protein resides in the cytoplasm. It carries out the reaction ATP + H2O + cellular proteinSide 1 = ADP + phosphate + cellular proteinSide 2.. In terms of biological role, part of the Sec protein translocase complex. Interacts with the SecYEG preprotein conducting channel. Has a central role in coupling the hydrolysis of ATP to the transfer of proteins into and across the cell membrane, serving both as a receptor for the preprotein-SecB complex and as an ATP-driven molecular motor driving the stepwise translocation of polypeptide chains across the membrane. In Burkholderia vietnamiensis (strain G4 / LMG 22486) (Burkholderia cepacia (strain R1808)), this protein is Protein translocase subunit SecA.